The following is a 161-amino-acid chain: UPF0262 protein SPOA0072 (161 aa).

Residues Met1–Pro21 form a disordered region.

It belongs to the UPF0262 family.

The sequence is that of UPF0262 protein SPOA0072 from Ruegeria pomeroyi (strain ATCC 700808 / DSM 15171 / DSS-3) (Silicibacter pomeroyi).